Reading from the N-terminus, the 156-residue chain is UPF0266 membrane protein YobD (156 aa).

Over 1-5 (MTITD) the chain is Periplasmic. The chain crosses the membrane as a helical span at residues 6-26 (LVLILFIAALLAYALYDQFIM). Residues 27-44 (PRRNGPTLLSIALLRRGR) are Cytoplasmic-facing. The helical transmembrane segment at 45–65 (VDSVIFVGLVAILIYNNVTSH) threads the bilayer. Residue Gly-66 is a topological domain, periplasmic. Residues 67–87 (AQMTTWLLSALALMGFYIFWI) traverse the membrane as a helical segment. The Cytoplasmic portion of the chain corresponds to 88–156 (RTPRIIFKQR…LLIENQYLKI (69 aa)).

Belongs to the UPF0266 family.

It is found in the cell inner membrane. The sequence is that of UPF0266 membrane protein YobD (yobD) from Salmonella typhimurium (strain LT2 / SGSC1412 / ATCC 700720).